Consider the following 809-residue polypeptide: Sucrose synthase 2 (809 aa).

Residues M278–T756 are GT-B glycosyltransferase.

The protein belongs to the glycosyltransferase 1 family. Plant sucrose synthase subfamily.

It carries out the reaction an NDP-alpha-D-glucose + D-fructose = a ribonucleoside 5'-diphosphate + sucrose + H(+). Sucrose-cleaving enzyme that provides UDP-glucose and fructose for various metabolic pathways. The protein is Sucrose synthase 2 (SUS2) of Pisum sativum (Garden pea).